The primary structure comprises 296 residues: Urease accessory protein UreD (296 aa).

It belongs to the UreD family. As to quaternary structure, ureD, UreF and UreG form a complex that acts as a GTP-hydrolysis-dependent molecular chaperone, activating the urease apoprotein by helping to assemble the nickel containing metallocenter of UreC. The UreE protein probably delivers the nickel.

The protein localises to the cytoplasm. Its function is as follows. Required for maturation of urease via the functional incorporation of the urease nickel metallocenter. The sequence is that of Urease accessory protein UreD from Janthinobacterium sp. (strain Marseille) (Minibacterium massiliensis).